The sequence spans 469 residues: MTRPVRTRFAPSPTGFIHLGNIRSALYPWAFARKMKGTFVLRIEDTDVERSSQEAVDAILEGMQWLGLDFDEGPIYQMQRMDRYREVLAQMLEKGLAYPCYMSAEELDALRERQREAGLKPRYDGTWRPEPGKVLPEPPAGVKPVLRFRNPLTGTVVWDDAVKGRVEISNEELDDLVIARPDGTPIYNFCVVVDDMDMGITHVIRGDDHVNNTPRQINILNALGGEPPVYAHLPTVLNEQGEKMSKRHGAMSVMAYRDAGFLPEAVVNYLARLGWSHGDAEIFSREQFVEWFDLEHLGKSPAQYDHSKLSWLNAHYIKEADNARLAELAKPFLDALGIDDAAIATGPALDAVVGLMKDRATTVKEIAEGATMFYRVPAPEADALAQHVTDAVRPALADLVAALKAADWTKEAVSAALKATLAAHKLKMPQLAMPVRLLVAGTTHTPSIDAVLVLFGRDVVVSRIEAALA.

The 'HIGH' region signature appears at 11-21 (PSPTGFIHLGN). A 'KMSKS' region motif is present at residues 243–247 (KMSKR). Position 246 (lysine 246) interacts with ATP.

It belongs to the class-I aminoacyl-tRNA synthetase family. Glutamate--tRNA ligase type 1 subfamily. As to quaternary structure, monomer.

It is found in the cytoplasm. It catalyses the reaction tRNA(Glu) + L-glutamate + ATP = L-glutamyl-tRNA(Glu) + AMP + diphosphate. Functionally, catalyzes the attachment of glutamate to tRNA(Glu) in a two-step reaction: glutamate is first activated by ATP to form Glu-AMP and then transferred to the acceptor end of tRNA(Glu). The protein is Glutamate--tRNA ligase of Burkholderia cenocepacia (strain ATCC BAA-245 / DSM 16553 / LMG 16656 / NCTC 13227 / J2315 / CF5610) (Burkholderia cepacia (strain J2315)).